Here is a 296-residue protein sequence, read N- to C-terminus: Putative thiosulfate sulfurtransferase SseA (296 aa).

2 Rhodanese domains span residues 31-138 and 168-286; these read GKPG…DTSL and ILGT…VPIT. C245 (cysteine persulfide intermediate) is an active-site residue. Position 250 (R250) interacts with substrate.

It carries out the reaction thiosulfate + hydrogen cyanide = thiocyanate + sulfite + 2 H(+). The chain is Putative thiosulfate sulfurtransferase SseA (sseA) from Mycobacterium leprae (strain TN).